The sequence spans 65 residues: Large ribosomal subunit protein bL35 (65 aa).

Over residues 1 to 15 (MPKMKTKSSAKKRFS) the composition is skewed to basic residues. A disordered region spans residues 1–21 (MPKMKTKSSAKKRFSIRAGGS).

This sequence belongs to the bacterial ribosomal protein bL35 family.

The sequence is that of Large ribosomal subunit protein bL35 from Dechloromonas aromatica (strain RCB).